Consider the following 347-residue polypeptide: Chaperone protein DnaJ 1 (347 aa).

Residues 5–75 enclose the J domain; it reads DPHSLLGLSP…PAAAPHDAQA (71 aa). The span at 68–77 shows a compositional bias: low complexity; it reads AAPHDAQAAD. The disordered stretch occupies residues 68 to 91; it reads AAPHDAQAADARPEPPPEAPPRGA. The segment at 107–181 adopts a CR-type zinc-finger fold; the sequence is GGEKAFTIAD…CHGSGQARAA (75 aa). Cys-120, Cys-123, Cys-137, Cys-140, Cys-155, Cys-158, Cys-169, and Cys-172 together coordinate Zn(2+). CXXCXGXG motif repeat units follow at residues 120-127, 137-144, 155-162, and 169-176; these read CGACGGSG, CATCHGSG, CADCAGRG, and CGACHGSG.

This sequence belongs to the DnaJ family. As to quaternary structure, homodimer. It depends on Zn(2+) as a cofactor.

The protein resides in the cytoplasm. Participates actively in the response to hyperosmotic and heat shock by preventing the aggregation of stress-denatured proteins and by disaggregating proteins, also in an autonomous, DnaK-independent fashion. Unfolded proteins bind initially to DnaJ; upon interaction with the DnaJ-bound protein, DnaK hydrolyzes its bound ATP, resulting in the formation of a stable complex. GrpE releases ADP from DnaK; ATP binding to DnaK triggers the release of the substrate protein, thus completing the reaction cycle. Several rounds of ATP-dependent interactions between DnaJ, DnaK and GrpE are required for fully efficient folding. Also involved, together with DnaK and GrpE, in the DNA replication of plasmids through activation of initiation proteins. The sequence is that of Chaperone protein DnaJ 1 from Aromatoleum aromaticum (strain DSM 19018 / LMG 30748 / EbN1) (Azoarcus sp. (strain EbN1)).